Consider the following 410-residue polypeptide: Bifunctional enzyme IspD/IspF (410 aa).

The 2-C-methyl-D-erythritol 4-phosphate cytidylyltransferase stretch occupies residues 1 to 257 (MSHDPVVPSA…AGAGSASSRL (257 aa)). Positions 258–410 (RSGIGTDVHA…AVATALVERL (153 aa)) are 2-C-methyl-D-erythritol 2,4-cyclodiphosphate synthase. 2 residues coordinate a divalent metal cation: Asp-264 and His-266. Residues 264-266 (DVH) and 290-291 (HS) each bind 4-CDP-2-C-methyl-D-erythritol 2-phosphate. His-298 lines the a divalent metal cation pocket. 4-CDP-2-C-methyl-D-erythritol 2-phosphate-binding positions include 312-314 (DIG), 385-388 (TTTD), Phe-392, and Arg-395.

The protein in the N-terminal section; belongs to the IspD/TarI cytidylyltransferase family. IspD subfamily. It in the C-terminal section; belongs to the IspF family. A divalent metal cation serves as cofactor.

It catalyses the reaction 2-C-methyl-D-erythritol 4-phosphate + CTP + H(+) = 4-CDP-2-C-methyl-D-erythritol + diphosphate. The enzyme catalyses 4-CDP-2-C-methyl-D-erythritol 2-phosphate = 2-C-methyl-D-erythritol 2,4-cyclic diphosphate + CMP. It functions in the pathway isoprenoid biosynthesis; isopentenyl diphosphate biosynthesis via DXP pathway; isopentenyl diphosphate from 1-deoxy-D-xylulose 5-phosphate: step 2/6. It participates in isoprenoid biosynthesis; isopentenyl diphosphate biosynthesis via DXP pathway; isopentenyl diphosphate from 1-deoxy-D-xylulose 5-phosphate: step 4/6. Its function is as follows. Bifunctional enzyme that catalyzes the formation of 4-diphosphocytidyl-2-C-methyl-D-erythritol from CTP and 2-C-methyl-D-erythritol 4-phosphate (MEP) (IspD), and catalyzes the conversion of 4-diphosphocytidyl-2-C-methyl-D-erythritol 2-phosphate (CDP-ME2P) to 2-C-methyl-D-erythritol 2,4-cyclodiphosphate (ME-CPP) with a corresponding release of cytidine 5-monophosphate (CMP) (IspF). The sequence is that of Bifunctional enzyme IspD/IspF from Clavibacter michiganensis subsp. michiganensis (strain NCPPB 382).